A 496-amino-acid chain; its full sequence is Pituitary adenylate cyclase-activating polypeptide type I receptor (496 aa).

The first 20 residues, 1–20 (MARTLQLSLTALLLLPMAIA), serve as a signal peptide directing secretion. Residues 21 to 152 (MHSDCIFKKE…SGDQDYYYLS (132 aa)) are Extracellular-facing. Disulfide bonds link cysteine 34/cysteine 63, cysteine 54/cysteine 118, and cysteine 77/cysteine 134. N-linked (GlcNAc...) asparagine glycans are attached at residues asparagine 48, asparagine 60, and asparagine 117. Residues 125–139 (EPFPHYFDACGFDDY) form an important for ADCYAP1/PACAP ligand binding and specificity region. Residues 125-139 (EPFPHYFDACGFDDY) are important for ligand binding and specificity. A helical transmembrane segment spans residues 153-177 (VKALYTVGYSTSLVTLTTAMVILCR). At 178–187 (FRKLHCTRNF) the chain is on the cytoplasmic side. The chain crosses the membrane as a helical span at residues 188 to 208 (IHMNLFVSFMLRAISVFIKDW). At 209–223 (ILYAEQDSSHCFVST) the chain is on the extracellular side. Residues 224–249 (VECKAVMVFFHYCVVSNYFWLFIEGL) form a helical membrane-spanning segment. A disulfide bridge connects residues cysteine 226 and cysteine 296. Topologically, residues 250 to 267 (YLFTLLVETFFPERRYFY) are cytoplasmic. The helical transmembrane segment at 268-290 (WYTIIGWGTPTVCVTVWAVLRLY) threads the bilayer. Over 291 to 302 (FDDAGCWDMNDS) the chain is Extracellular. A helical membrane pass occupies residues 303–329 (TALWWVIKGPVVGSIMVNFVLFIGIII). Over 330-347 (ILVQKLQSPDMGGNESSI) the chain is Cytoplasmic. The helical transmembrane segment at 348-402 (YFSCVQKCYCKPQRAQQHSCKMSELSTITLRLARSTLLLIPLFGIHYTVFAFSPE) threads the bilayer. Residues 403–407 (NVSKR) lie on the Extracellular side of the membrane. The chain crosses the membrane as a helical span at residues 408-431 (ERLVFELGLGSFQGFVVAVLYCFL). The Cytoplasmic segment spans residues 432–496 (NGEVQAEIKR…SSLPADNLAT (65 aa)). Serine 462 and serine 475 each carry phosphoserine.

This sequence belongs to the G-protein coupled receptor 2 family. As to quaternary structure, interacts with maxadilan, a vasodilator peptide from Lutzomyia longipalpis saliva; the interaction results in ADCYAP1R1 activation.

The protein resides in the cell membrane. Functionally, g protein-coupled receptor activated by the neuropeptide pituitary adenylate cyclase-activating polypeptide (ADCYAP1/PACAP). Binds both PACAP27 and PACAP38 bioactive peptides. Ligand binding causes a conformation change that triggers signaling via guanine nucleotide-binding proteins (G proteins) and modulates the activity of downstream effectors. Activates cAMP-dependent pathway. May regulate the release of adrenocorticotropin, luteinizing hormone, growth hormone, prolactin, epinephrine, and catecholamine. May play a role in spermatogenesis and sperm motility. Causes smooth muscle relaxation and secretion in the gastrointestinal tract. The protein is Pituitary adenylate cyclase-activating polypeptide type I receptor of Mus musculus (Mouse).